The primary structure comprises 445 residues: POU domain, class 3, transcription factor 2 (445 aa).

Disordered regions lie at residues Ala-64–Ala-173 and Leu-203–Ser-269. The segment covering His-67–Gly-90 has biased composition (gly residues). Composition is skewed to low complexity over residues Gln-125–Gln-151 and His-163–Ala-173. Positions Leu-217 to His-226 are enriched in basic and acidic residues. The span at Ala-227–Pro-237 shows a compositional bias: basic residues. Pro residues predominate over residues Gln-239–His-253. The POU-specific domain maps to Glu-264–Asp-338. At Ser-343 the chain carries Phosphoserine. The homeobox DNA-binding region spans Lys-356–Thr-415. The interval Glu-411–Gln-445 is disordered.

This sequence belongs to the POU transcription factor family. Class-3 subfamily. In terms of assembly, interacts with PQBP1. Interaction with ISL1. As to expression, expressed specifically in the neuroectodermal cell lineage.

It localises to the nucleus. Transcription factor that plays a key role in neuronal differentiation. Binds preferentially to the recognition sequence which consists of two distinct half-sites, ('GCAT') and ('TAAT'), separated by a non-conserved spacer region of 0, 2, or 3 nucleotides. Acts as a transcriptional activator when binding cooperatively with SOX4, SOX11, or SOX12 to gene promoters. The combination of three transcription factors, ASCL1, POU3F2/BRN2 and MYT1L, is sufficient to reprogram fibroblasts and other somatic cells into induced neuronal (iN) cells in vitro. Acts downstream of ASCL1, accessing chromatin that has been opened by ASCL1, and promotes transcription of neuronal genes. In Mus musculus (Mouse), this protein is POU domain, class 3, transcription factor 2 (Pou3f2).